The chain runs to 606 residues: Elongation factor 4 (606 aa).

Residues 11 to 193 enclose the tr-type G domain; the sequence is DKIRNFSIVA…AIVTRLPPPK (183 aa). GTP is bound by residues 23–28 and 140–143; these read DHGKST and NKVD.

The protein belongs to the TRAFAC class translation factor GTPase superfamily. Classic translation factor GTPase family. LepA subfamily.

The protein resides in the cell inner membrane. The catalysed reaction is GTP + H2O = GDP + phosphate + H(+). In terms of biological role, required for accurate and efficient protein synthesis under certain stress conditions. May act as a fidelity factor of the translation reaction, by catalyzing a one-codon backward translocation of tRNAs on improperly translocated ribosomes. Back-translocation proceeds from a post-translocation (POST) complex to a pre-translocation (PRE) complex, thus giving elongation factor G a second chance to translocate the tRNAs correctly. Binds to ribosomes in a GTP-dependent manner. This is Elongation factor 4 from Caulobacter vibrioides (strain ATCC 19089 / CIP 103742 / CB 15) (Caulobacter crescentus).